A 604-amino-acid chain; its full sequence is Kinesin-like protein KIN-14O (604 aa).

Residues 22-61 (MLNHDKDISALQEEISALRSRQRHLDHRRQEALDKLIDLK) are a coiled coil. Positions 63 to 387 (SIRVFCRVRP…LSFAKRARSI (325 aa)) constitute a Kinesin motor domain. 141–148 (GQTGTGKT) provides a ligand contact to ATP. Residues 383–443 (RARSIESSKE…EERKKLSSSA (61 aa)) are a coiled coil. Disordered stretches follow at residues 465–511 (DSAE…KTRL) and 565–604 (SNNS…SSLT). Residues 565–574 (SNNSIDSTAA) show a composition bias toward polar residues. Basic residues predominate over residues 593–604 (LHQHRRRMSSLT).

The protein belongs to the TRAFAC class myosin-kinesin ATPase superfamily. Kinesin family. KIN-14 subfamily.

This is Kinesin-like protein KIN-14O from Oryza sativa subsp. japonica (Rice).